A 243-amino-acid chain; its full sequence is UDP-2,3-diacylglucosamine hydrolase (243 aa).

Aspartate 8, histidine 10, aspartate 41, asparagine 79, and histidine 114 together coordinate Mn(2+). 79 to 80 (NR) provides a ligand contact to substrate. 4 residues coordinate substrate: aspartate 122, lysine 164, lysine 167, and histidine 195. Mn(2+) is bound by residues histidine 195 and histidine 197.

Belongs to the LpxH family. Mn(2+) is required as a cofactor.

It is found in the cell inner membrane. The catalysed reaction is UDP-2-N,3-O-bis[(3R)-3-hydroxytetradecanoyl]-alpha-D-glucosamine + H2O = 2-N,3-O-bis[(3R)-3-hydroxytetradecanoyl]-alpha-D-glucosaminyl 1-phosphate + UMP + 2 H(+). It participates in glycolipid biosynthesis; lipid IV(A) biosynthesis; lipid IV(A) from (3R)-3-hydroxytetradecanoyl-[acyl-carrier-protein] and UDP-N-acetyl-alpha-D-glucosamine: step 4/6. Its function is as follows. Hydrolyzes the pyrophosphate bond of UDP-2,3-diacylglucosamine to yield 2,3-diacylglucosamine 1-phosphate (lipid X) and UMP by catalyzing the attack of water at the alpha-P atom. Involved in the biosynthesis of lipid A, a phosphorylated glycolipid that anchors the lipopolysaccharide to the outer membrane of the cell. The protein is UDP-2,3-diacylglucosamine hydrolase of Vibrio vulnificus (strain YJ016).